The primary structure comprises 343 residues: MFRGKIFVLSLFSIYVLSSAAEKNTSFSALFAFGDSVLDTGNNNFLLTLLKGNYWPYGLSFDYKFPTGRFGNGRVFTDIVAEGLQIKRLVPAYSKIRRISSEDLKTGVCFASGGSGIDDLTSRTLRVLSAGDQVKDFKDYLKKLRRVVKRKKKVKEIVSNAVFLISEGNNDLGYFVAPALLRLQSTTTYTSKMVVWTRKFLKDLYDLGARKFAVMGVMPVGCLPIHRASFGGVFGWCNFLLNRITEDFNMKLQKGLTSYAVEYDFKDAKFVYVDIYGTLMDLVKNPMAYGFTEAKKACCCMPNAIIPCFHPDKYVFYDFAHPSQKAYEVISKPIVYQIAKGLA.

An N-terminal signal peptide occupies residues 1 to 21; sequence MFRGKIFVLSLFSIYVLSSAA. Asn24 carries an N-linked (GlcNAc...) asparagine glycan. Ser36 acts as the Nucleophile in catalysis. Active-site residues include Asp318 and His321.

Belongs to the 'GDSL' lipolytic enzyme family. As to expression, flower buds and pollen.

The protein localises to the secreted. The protein resides in the extracellular space. It localises to the extracellular matrix. It is found in the pollen coat. Functionally, required for the formation of pollen coats and male fertility. The protein is GDSL esterase/lipase EXL6 (EXL6) of Arabidopsis thaliana (Mouse-ear cress).